The following is a 188-amino-acid chain: Adenine phosphoribosyltransferase (188 aa).

134–138 (ATGGS) serves as a coordination point for AMP.

The protein belongs to the purine/pyrimidine phosphoribosyltransferase family. Homodimer. It depends on Mg(2+) as a cofactor.

The protein localises to the cytoplasm. It localises to the nucleus. The enzyme catalyses AMP + diphosphate = 5-phospho-alpha-D-ribose 1-diphosphate + adenine. It functions in the pathway purine metabolism; AMP biosynthesis via salvage pathway; AMP from adenine: step 1/1. In terms of biological role, catalyzes a salvage reaction resulting in the formation of AMP, that is energically less costly than de novo synthesis. The protein is Adenine phosphoribosyltransferase (APT1) of Candida albicans (strain SC5314 / ATCC MYA-2876) (Yeast).